The chain runs to 1376 residues: Zinc finger MYM-type protein 2 (1376 aa).

The segment covering 30 to 53 (NVGNSFSGPPNPLVSRSSKFQNSS) has biased composition (polar residues). Disordered regions lie at residues 30–56 (NVGNSFSGPPNPLVSRSSKFQNSSVED) and 85–158 (TSSK…FSSS). Glycyl lysine isopeptide (Lys-Gly) (interchain with G-Cter in SUMO2) cross-links involve residues lysine 48, lysine 88, lysine 98, and lysine 104. Positions 127-138 (TNQGQEKSSSNF) are enriched in polar residues. Over residues 139 to 152 (IERRPSETKNRTND) the composition is skewed to basic and acidic residues. Residues lysine 147, lysine 253, and lysine 297 each participate in a glycyl lysine isopeptide (Lys-Gly) (interchain with G-Cter in SUMO2) cross-link. Residues 269–304 (DVFQNGESAPHHNPDSWISQSASFPRNQKQQGVDSL) form a disordered region. Residues 284 to 302 (SWISQSASFPRNQKQQGVD) are compositionally biased toward polar residues. Serine 305 carries the post-translational modification Phosphoserine. Residues lysine 312, lysine 324, lysine 347, and lysine 365 each participate in a glycyl lysine isopeptide (Lys-Gly) (interchain with G-Cter in SUMO2) cross-link. The MYM-type 1 zinc-finger motif lies at 326-362 (VKVTCANCKKPLQKGQTAYQRKGSAHLFCSTTCLSSF). Residues 368-408 (PKKLCVMCKKDITTMKGTIVAQVDSSESFQEFCSTSCLSLY) form an MYM-type 2 zinc finger. Glycyl lysine isopeptide (Lys-Gly) (interchain with G-Cter in SUMO2) cross-links involve residues lysine 416, lysine 440, lysine 490, lysine 502, lysine 512, lysine 528, and lysine 531. 2 MYM-type zinc fingers span residues 420–455 (NKSRCTICGKLTEIRHEVSFKNMTHKLCSDHCFNRY) and 462–501 (IMNCCEQCGEYLPSKGAGNNVLVVDGQQKRFCCQSCVTEY). The MYM-type 5 zinc-finger motif lies at 532–569 (LTTCTGCRTQCRFFDMTQCIGPNGYMEPYCSTACMNSH). Glycyl lysine isopeptide (Lys-Gly) (interchain with G-Cter in SUMO2) cross-links involve residues lysine 575, lysine 602, lysine 648, lysine 657, lysine 687, lysine 699, and lysine 708. The MYM-type 6 zinc-finger motif lies at 635 to 670 (QLKCNYCKNSFCSKPEILEWENKVHQFCSKTCSDDY). 2 MYM-type zinc fingers span residues 722-757 (RCVTCNYCSQLCKKGATKELDGVVRDFCSEDCCKKF) and 763-798 (KAARCDCCKSQGTLKERVQWRGEMKHFCDQHCLLRF). Residues lysine 763, lysine 787, lysine 811, and lysine 828 each participate in a glycyl lysine isopeptide (Lys-Gly) (interchain with G-Cter in SUMO2) cross-link. Phosphoserine is present on serine 837. The disordered stretch occupies residues 1027–1063 (VFGEEYEEQPRPRSKKKGTKRKAVSGYQSHDDSSDNS). Over residues 1038–1049 (PRSKKKGTKRKA) the composition is skewed to basic residues. Position 1063 is a phosphoserine (serine 1063). Threonine 1375 carries the phosphothreonine modification.

In terms of assembly, can form homodimers. May be a component of a BHC histone deacetylase complex that contains HDAC1, HDAC2, HMG20B/BRAF35, KDM1A, RCOR1/CoREST, PHF21A/BHC80, ZMYM2, ZNF217, ZMYM3, GSE1 and GTF2I. Interacts with FOXP1 and FOXP2. In terms of tissue distribution, low but widespread expression is detected in the developing kidney.

The protein resides in the nucleus. Its function is as follows. Involved in the negative regulation of transcription. The protein is Zinc finger MYM-type protein 2 (Zmym2) of Mus musculus (Mouse).